The primary structure comprises 343 residues: Allantoicase (343 aa).

The protein belongs to the allantoicase family.

It carries out the reaction allantoate + H2O = (S)-ureidoglycolate + urea. It participates in nitrogen metabolism; (S)-allantoin degradation; (S)-ureidoglycolate from allantoate (aminidohydrolase route): step 1/1. Functionally, utilization of purines as secondary nitrogen sources, when primary sources are limiting. This Saccharomyces cerevisiae (strain ATCC 204508 / S288c) (Baker's yeast) protein is Allantoicase (DAL2).